Here is a 437-residue protein sequence, read N- to C-terminus: Gamma-glutamyl phosphate reductase (437 aa).

Belongs to the gamma-glutamyl phosphate reductase family.

The protein localises to the cytoplasm. It carries out the reaction L-glutamate 5-semialdehyde + phosphate + NADP(+) = L-glutamyl 5-phosphate + NADPH + H(+). The protein operates within amino-acid biosynthesis; L-proline biosynthesis; L-glutamate 5-semialdehyde from L-glutamate: step 2/2. In terms of biological role, catalyzes the NADPH-dependent reduction of L-glutamate 5-phosphate into L-glutamate 5-semialdehyde and phosphate. The product spontaneously undergoes cyclization to form 1-pyrroline-5-carboxylate. This chain is Gamma-glutamyl phosphate reductase, found in Synechococcus sp. (strain CC9902).